Reading from the N-terminus, the 167-residue chain is MAPITLSTVDDDLKEVIQHLFEIQSAVHGYLGPETQTELVRKIKNLTLALSTLSTHTKPQPPSQDEEQKEKQDDTPEGSANDPLLRDIQLPPEIIDYVDAARNPDIYTREFVELVQRGNQDLKGKKEAFASFRDVLAREMRSAMPECRGEVERVLAATGGARVDTEQ.

Positions 53-88 are disordered; that stretch reads LSTHTKPQPPSQDEEQKEKQDDTPEGSANDPLLRDI.

This sequence belongs to the Mediator complex subunit 10 family. In terms of assembly, component of the Mediator complex.

It is found in the nucleus. Component of the Mediator complex, a coactivator involved in the regulated transcription of nearly all RNA polymerase II-dependent genes. Mediator functions as a bridge to convey information from gene-specific regulatory proteins to the basal RNA polymerase II transcription machinery. Mediator is recruited to promoters by direct interactions with regulatory proteins and serves as a scaffold for the assembly of a functional preinitiation complex with RNA polymerase II and the general transcription factors. The sequence is that of Mediator of RNA polymerase II transcription subunit 10 (nut2) from Neosartorya fischeri (strain ATCC 1020 / DSM 3700 / CBS 544.65 / FGSC A1164 / JCM 1740 / NRRL 181 / WB 181) (Aspergillus fischerianus).